The sequence spans 275 residues: Putative hydro-lyase SPO1111 (275 aa).

It belongs to the D-glutamate cyclase family.

The sequence is that of Putative hydro-lyase SPO1111 from Ruegeria pomeroyi (strain ATCC 700808 / DSM 15171 / DSS-3) (Silicibacter pomeroyi).